The sequence spans 273 residues: Light-independent protochlorophyllide reductase iron-sulfur ATP-binding protein (273 aa).

ATP-binding positions include 12–17 (GIGKST) and Lys41. Ser16 is a binding site for Mg(2+). 2 residues coordinate [4Fe-4S] cluster: Cys97 and Cys131. 182–183 (NR) provides a ligand contact to ATP.

It belongs to the NifH/BchL/ChlL family. As to quaternary structure, homodimer. Protochlorophyllide reductase is composed of three subunits; BchL, BchN and BchB. [4Fe-4S] cluster is required as a cofactor.

The catalysed reaction is chlorophyllide a + oxidized 2[4Fe-4S]-[ferredoxin] + 2 ADP + 2 phosphate = protochlorophyllide a + reduced 2[4Fe-4S]-[ferredoxin] + 2 ATP + 2 H2O. It functions in the pathway porphyrin-containing compound metabolism; bacteriochlorophyll biosynthesis (light-independent). Functionally, component of the dark-operative protochlorophyllide reductase (DPOR) that uses Mg-ATP and reduced ferredoxin to reduce ring D of protochlorophyllide (Pchlide) to form chlorophyllide a (Chlide). This reaction is light-independent. The L component serves as a unique electron donor to the NB-component of the complex, and binds Mg-ATP. The polypeptide is Light-independent protochlorophyllide reductase iron-sulfur ATP-binding protein (Chloroflexus aggregans (strain MD-66 / DSM 9485)).